The chain runs to 325 residues: Transcription initiation factor IIB (325 aa).

The TFIIB-type zinc finger occupies 19–52; the sequence is NKLWCMVCRIQDPDIIEDYAKGDLICRGCGVVVG. The Zn(2+) site is built by C23, C26, C44, and C47. Tandem repeats lie at residues 131 to 207 and 227 to 303.

It belongs to the TFIIB family.

It is found in the nucleus. In terms of biological role, general transcription factor that plays a role in transcription initiation by RNA polymerase II (Pol II). Involved in the pre-initiation complex (PIC) formation and Pol II recruitment at promoter DNA. In Dictyostelium discoideum (Social amoeba), this protein is Transcription initiation factor IIB (gtf2b).